A 275-amino-acid chain; its full sequence is Thymidylate synthase (275 aa).

138–139 is a binding site for dUMP; that stretch reads RR. Cysteine 158 acts as the Nucleophile in catalysis. DUMP-binding positions include 178-181, asparagine 189, and 219-221; these read RSCD and HIY. Aspartate 181 serves as a coordination point for (6R)-5,10-methylene-5,6,7,8-tetrahydrofolate. Alanine 274 serves as a coordination point for (6R)-5,10-methylene-5,6,7,8-tetrahydrofolate.

This sequence belongs to the thymidylate synthase family. Bacterial-type ThyA subfamily. Homodimer.

The protein resides in the cytoplasm. The catalysed reaction is dUMP + (6R)-5,10-methylene-5,6,7,8-tetrahydrofolate = 7,8-dihydrofolate + dTMP. It functions in the pathway pyrimidine metabolism; dTTP biosynthesis. Catalyzes the reductive methylation of 2'-deoxyuridine-5'-monophosphate (dUMP) to 2'-deoxythymidine-5'-monophosphate (dTMP) while utilizing 5,10-methylenetetrahydrofolate (mTHF) as the methyl donor and reductant in the reaction, yielding dihydrofolate (DHF) as a by-product. This enzymatic reaction provides an intracellular de novo source of dTMP, an essential precursor for DNA biosynthesis. The chain is Thymidylate synthase from Fusobacterium nucleatum subsp. nucleatum (strain ATCC 25586 / DSM 15643 / BCRC 10681 / CIP 101130 / JCM 8532 / KCTC 2640 / LMG 13131 / VPI 4355).